The primary structure comprises 315 residues: ADP/ATP translocase 4 (315 aa).

The Mitochondrial intermembrane portion of the chain corresponds to 1 to 19; it reads MHREPAKKKAEKRLFDASS. A Solcar 1 repeat occupies 18 to 110; that stretch reads SSFGKDLLAG…FAFKDKYKQL (93 aa). The helical transmembrane segment at 20 to 49 threads the bilayer; that stretch reads FGKDLLAGGVAAAVSKTAVAPIERVKLLLQ. The Mitochondrial matrix segment spans residues 50-86; sequence VQASSKQISPEARYKGMVDCLVRIPREQGFFSFWRGN. Residues 87–111 traverse the membrane as a helical segment; the sequence is LANVIRYFPTQALNFAFKDKYKQLF. ADP-binding residues include Arg92 and Lys104. At 112-121 the chain is on the mitochondrial intermembrane side; that stretch reads MSGVNKEKQF. Residues 122 to 142 traverse the membrane as a helical segment; the sequence is WRWFLANLASGGAAGATSLCV. 2 Solcar repeats span residues 123–213 and 220–307; these read RWFL…VKGL and TPFL…IKEF. The Mitochondrial matrix portion of the chain corresponds to 143–190; the sequence is VYPLDFARTRLGVDIGKGPEERQFKGLGDCIMKIAKSDGIAGLYQGFG. Residues 191-211 traverse the membrane as a helical segment; it reads VSVQGIIVYRASYFGAYDTVK. Over 212 to 222 the chain is Mitochondrial intermembrane; that stretch reads GLLPKPKKTPF. The helical transmembrane segment at 223–243 threads the bilayer; the sequence is LVSFFIAQVVTTCSGILSYPF. Residues 244–283 are Mitochondrial matrix-facing; sequence DTVRRRMMMQSGEAKRQYKGTLDCFVKIYQHEGISSFFRG. Position 247 (Arg247) interacts with ADP. Positions 247 to 252 are important for transport activity; the sequence is RRRMMM. The Nucleotide carrier signature motif motif lies at 247 to 252; sequence RRRMMM. The chain crosses the membrane as a helical span at residues 284–301; the sequence is AFSNVLRGTGGALVLVLY. Residues 302-315 are Mitochondrial intermembrane-facing; it reads DKIKEFFHIDIGGR.

Belongs to the mitochondrial carrier (TC 2.A.29) family. As to quaternary structure, monomer. As to expression, expressed in brain, liver, sperm and testis. In testis, expressed at higher level in spermatocytes, while it is expressed at lower level in spermatogonial cells. Expressed in erythrocytes (at protein level).

The protein localises to the mitochondrion inner membrane. It is found in the membrane. The protein resides in the cell projection. Its subcellular location is the cilium. It localises to the flagellum membrane. The enzyme catalyses ADP(in) + ATP(out) = ADP(out) + ATP(in). It catalyses the reaction dATP(out) + ADP(in) = dATP(in) + ADP(out). The catalysed reaction is dADP(in) + ADP(out) = dADP(out) + ADP(in). It carries out the reaction H(+)(in) = H(+)(out). Its activity is regulated as follows. The matrix-open state (m-state) is inhibited by the membrane-permeable bongkrekic acid (BKA). The cytoplasmic-open state (c-state) is inhibited by the membrane-impermeable toxic inhibitor carboxyatractyloside (CATR). Proton transporter activity is inhibited by ADP:ATP antiporter activity. ADP:ATP antiporter that mediates import of ADP into the mitochondrial matrix for ATP synthesis, and export of ATP out to fuel the cell. Cycles between the cytoplasmic-open state (c-state) and the matrix-open state (m-state): operates by the alternating access mechanism with a single substrate-binding site intermittently exposed to either the cytosolic (c-state) or matrix (m-state) side of the inner mitochondrial membrane. Specifically required during spermatogenesis, probably to mediate ADP:ATP exchange in spermatocytes. Large ATP supplies from mitochondria may be critical for normal progression of spermatogenesis during early stages of meiotic prophase I, including DNA double-strand break repair and chromosomal synapsis. In addition to its ADP:ATP antiporter activity, also involved in mitochondrial uncoupling and mitochondrial permeability transition pore (mPTP) activity. Plays a role in mitochondrial uncoupling by acting as a proton transporter: proton transport uncouples the proton flows via the electron transport chain and ATP synthase to reduce the efficiency of ATP production and cause mitochondrial thermogenesis. Proton transporter activity is inhibited by ADP:ATP antiporter activity, suggesting that SLC25A31/ANT4 acts as a master regulator of mitochondrial energy output by maintaining a delicate balance between ATP production (ADP:ATP antiporter activity) and thermogenesis (proton transporter activity). Proton transporter activity requires free fatty acids as cofactor, but does not transport it. Among nucleotides, may also exchange ADP for dATP and dADP. Also plays a key role in mPTP opening, a non-specific pore that enables free passage of the mitochondrial membranes to solutes of up to 1.5 kDa, and which contributes to cell death. It is however unclear if SLC25A31/ANT4 constitutes a pore-forming component of mPTP or regulates it. The chain is ADP/ATP translocase 4 from Homo sapiens (Human).